We begin with the raw amino-acid sequence, 893 residues long: TBC domain-containing protein kinase-like protein (893 aa).

Residues 1–274 form the Protein kinase domain; it reads MFPLRDTEMG…EELMHDHLFS (274 aa). Residues 466 to 651 enclose the Rab-GAP TBC domain; the sequence is DIPPLLRGIT…HLWDTLLLGN (186 aa). In terms of domain architecture, Rhodanese spans 790 to 889; the sequence is SKPKLLVVDI…IKPTGLLTVP (100 aa).

The protein belongs to the protein kinase superfamily. In terms of assembly, component of the FERRY complex.

The protein localises to the cytoplasm. It is found in the cytoskeleton. The protein resides in the spindle. Its subcellular location is the midbody. It localises to the early endosome. Component of the FERRY complex (Five-subunit Endosomal Rab5 and RNA/ribosome intermediary). The FERRY complex directly interacts with mRNAs and RAB5A, and functions as a RAB5A effector involved in the localization and the distribution of specific mRNAs most likely by mediating their endosomal transport. The complex recruits mRNAs and ribosomes to early endosomes through direct mRNA-interaction. Also involved in the modulation of mTOR signaling and expression of mTOR complex components. Involved in the control of actin-cytoskeleton organization. In Gallus gallus (Chicken), this protein is TBC domain-containing protein kinase-like protein.